We begin with the raw amino-acid sequence, 74 residues long: Small ribosomal subunit protein eS28 (74 aa).

This sequence belongs to the eukaryotic ribosomal protein eS28 family.

The chain is Small ribosomal subunit protein eS28 from Halobacterium salinarum (strain ATCC 29341 / DSM 671 / R1).